We begin with the raw amino-acid sequence, 149 residues long: Large ribosomal subunit protein uL13 (149 aa).

It belongs to the universal ribosomal protein uL13 family. Part of the 50S ribosomal subunit.

In terms of biological role, this protein is one of the early assembly proteins of the 50S ribosomal subunit, although it is not seen to bind rRNA by itself. It is important during the early stages of 50S assembly. The polypeptide is Large ribosomal subunit protein uL13 (Borrelia recurrentis (strain A1)).